The following is a 600-amino-acid chain: Aspartate--tRNA(Asp/Asn) ligase (600 aa).

Glu-187 contributes to the L-aspartate binding site. The interval 211–214 (QIFK) is aspartate. Arg-233 and His-463 together coordinate L-aspartate. Residue 233–235 (RDE) participates in ATP binding. Glu-497 is an ATP binding site. Arg-504 is a binding site for L-aspartate. 549–552 (GIDR) is a binding site for ATP.

It belongs to the class-II aminoacyl-tRNA synthetase family. Type 1 subfamily. As to quaternary structure, homodimer.

It localises to the cytoplasm. The catalysed reaction is tRNA(Asx) + L-aspartate + ATP = L-aspartyl-tRNA(Asx) + AMP + diphosphate. In terms of biological role, aspartyl-tRNA synthetase with relaxed tRNA specificity since it is able to aspartylate not only its cognate tRNA(Asp) but also tRNA(Asn). Reaction proceeds in two steps: L-aspartate is first activated by ATP to form Asp-AMP and then transferred to the acceptor end of tRNA(Asp/Asn). This is Aspartate--tRNA(Asp/Asn) ligase from Wolbachia sp. subsp. Brugia malayi (strain TRS).